A 79-amino-acid polypeptide reads, in one-letter code: MLSKQKIERINELAKRAKTTGLTEDELREQKKLREEYIQQFRQSFKNQLHSVTVVDGAGNDVTPDKLKQSKNKYRNDIH.

The interval 57–79 is disordered; it reads GAGNDVTPDKLKQSKNKYRNDIH. Positions 63 to 79 are enriched in basic and acidic residues; it reads TPDKLKQSKNKYRNDIH.

Belongs to the UPF0291 family.

Its subcellular location is the cytoplasm. The sequence is that of UPF0291 protein BH2353 from Halalkalibacterium halodurans (strain ATCC BAA-125 / DSM 18197 / FERM 7344 / JCM 9153 / C-125) (Bacillus halodurans).